We begin with the raw amino-acid sequence, 381 residues long: Subtilisin E (381 aa).

The N-terminal stretch at 1-29 is a signal peptide; it reads MRSKKLWISLLFALTLIFTMAFSNMSAQA. The propeptide occupies 30 to 106; sequence AGKSSTEKKY…VEEDHIAHEY (77 aa). The Inhibitor I9 domain occupies 38–103; sequence KYIVGFKQTM…VAYVEEDHIA (66 aa). Ca(2+) is bound at residue Q108. Residues 111 to 380 form the Peptidase S8 domain; that stretch reads PYGISQIKAP…KGLINVQAAA (270 aa). Catalysis depends on D138, which acts as the Charge relay system. D147 is a binding site for Ca(2+). H170 acts as the Charge relay system in catalysis. Ca(2+) is bound by residues L181, N183, I185, V187, A275, Y277, T280, and D303. S327 serves as the catalytic Charge relay system.

This sequence belongs to the peptidase S8 family. The cofactor is Ca(2+).

It is found in the secreted. The enzyme catalyses Hydrolysis of proteins with broad specificity for peptide bonds, and a preference for a large uncharged residue in P1. Hydrolyzes peptide amides.. With respect to regulation, inhibited by PMSF (phenylmethylsulphonyl fluoride) and 3,4-dichloroisocoumarin but not by EDTA (shown for strain RT-5). In terms of biological role, an extracellular alkaline serine protease, it catalyzes the hydrolysis of proteins and peptide amides. In Bacillus subtilis (strain 168), this protein is Subtilisin E.